The chain runs to 189 residues: MIEQANQQIEKDVRDILKQVGDDPERAGVLETPQRVAKMYGEVLAYQGETIFKDYKLFETEETDDDQMVMMQDIPFYSMCEHHMLPFFGQVSVAYLPANGQIIGLSKIPRLVDFVSKRLSVQENLTRDIGQILNQILKPYGVAVQVTARHMCVEMRGIKKANSQTHTTFYSGNFKTDRQLRSEFLQLLK.

Zn(2+) contacts are provided by Cys-80, His-83, and Cys-152.

It belongs to the GTP cyclohydrolase I family. As to quaternary structure, toroid-shaped homodecamer, composed of two pentamers of five dimers.

It carries out the reaction GTP + H2O = 7,8-dihydroneopterin 3'-triphosphate + formate + H(+). It participates in cofactor biosynthesis; 7,8-dihydroneopterin triphosphate biosynthesis; 7,8-dihydroneopterin triphosphate from GTP: step 1/1. This chain is GTP cyclohydrolase 1, found in Latilactobacillus sakei subsp. sakei (strain 23K) (Lactobacillus sakei subsp. sakei).